We begin with the raw amino-acid sequence, 429 residues long: Chaperone SurA (429 aa).

Positions 1–18 (MFKRIALVCALFSGVCFA) are cleaved as a signal peptide. PpiC domains follow at residues 170 to 271 (NLTY…KLVA) and 281 to 380 (ITQT…EVIA).

It is found in the periplasm. It carries out the reaction [protein]-peptidylproline (omega=180) = [protein]-peptidylproline (omega=0). Its function is as follows. Chaperone involved in the correct folding and assembly of outer membrane proteins. Recognizes specific patterns of aromatic residues and the orientation of their side chains, which are found more frequently in integral outer membrane proteins. May act in both early periplasmic and late outer membrane-associated steps of protein maturation. This is Chaperone SurA from Legionella pneumophila subsp. pneumophila (strain Philadelphia 1 / ATCC 33152 / DSM 7513).